The primary structure comprises 161 residues: Phosphopantetheine adenylyltransferase (161 aa).

Ser9 contacts substrate. ATP contacts are provided by residues 9-10 (SF) and His17. Positions 41, 73, and 87 each coordinate substrate. Residues 88-90 (GLR), Glu98, and 123-129 (YTFISSS) each bind ATP.

Belongs to the bacterial CoaD family. As to quaternary structure, homohexamer. Mg(2+) is required as a cofactor.

It is found in the cytoplasm. The enzyme catalyses (R)-4'-phosphopantetheine + ATP + H(+) = 3'-dephospho-CoA + diphosphate. The protein operates within cofactor biosynthesis; coenzyme A biosynthesis; CoA from (R)-pantothenate: step 4/5. In terms of biological role, reversibly transfers an adenylyl group from ATP to 4'-phosphopantetheine, yielding dephospho-CoA (dPCoA) and pyrophosphate. This is Phosphopantetheine adenylyltransferase from Syntrophomonas wolfei subsp. wolfei (strain DSM 2245B / Goettingen).